We begin with the raw amino-acid sequence, 487 residues long: WD-40 repeat-containing protein MSI5 (487 aa).

An N-acetylmethionine modification is found at Met1. Residues 1–12 (MESEAAATVQAT) are compositionally biased toward low complexity. The disordered stretch occupies residues 1 to 44 (MESEAAATVQATRPRRAPRTPVTAILTDKRRRKPKSNNESQLPF). The short motif at 14–21 (PRRAPRTP) is the Nuclear localization signal element. 6 WD repeats span residues 142-182 (IHPG…DRYA), 197-237 (GHQD…TMAG), 270-310 (GHKD…SPAM), 315-355 (AHDA…SNGV), 364-404 (GHRA…KKSE), and 419-466 (GHRD…YRPE). Residues 236–268 (AGSDSKSPGSSFKQTGEGSDKTGGPSVGPRGIY) form a disordered region. Residues 237 to 252 (GSDSKSPGSSFKQTGE) are compositionally biased toward polar residues. The DWD box signature appears at 288 to 303 (FCSVGDDSCLMLWDAR).

This sequence belongs to the WD repeat RBAP46/RBAP48/MSI1 family. As to quaternary structure, interacts with AHL16. Interacts with LHP1, PDP2, PDP3 and PDP6. Component of the PRC2 (polycomb repressive complex 2) complex which regulates histone methylation on histone H3K27.

The protein resides in the nucleus. Functionally, core histone-binding subunit that may target chromatin assembly factors, chromatin remodeling factors and histone deacetylases to their histone substrates in a manner that is regulated by nucleosomal DNA. Acts together with PDP1 and MSI4/FVE to regulate the function of the PRC2 complex on FLC. This chain is WD-40 repeat-containing protein MSI5, found in Arabidopsis thaliana (Mouse-ear cress).